A 261-amino-acid polypeptide reads, in one-letter code: Calbindin (261 aa).

N-acetylalanine is present on Ala-2. Positions 2–7 are interaction with RANBP9; sequence AESHLQ. EF-hand domains lie at 11-46, 53-88, 98-133, 142-177, and 186-221; these read ITAS…LLQA, ELSP…EENF, KSCE…LLEK, KLAE…QENF, and MCGK…LCEK. Residues Asp-24, Asp-26, Ser-28, Tyr-30, and Glu-35 each coordinate Ca(2+). Residues Asp-111, Asp-113, Ser-115, Glu-122, Asp-155, Asn-157, Asp-159, Lys-161, Glu-166, Asp-199, Asp-201, Asn-203, Tyr-205, and Glu-210 each contribute to the Ca(2+) site.

It belongs to the calbindin family. As to quaternary structure, interacts with RANBP9.

Its function is as follows. Buffers cytosolic calcium. May stimulate a membrane Ca(2+)-ATPase and a 3',5'-cyclic nucleotide phosphodiesterase. This chain is Calbindin (Calb1), found in Rattus norvegicus (Rat).